Here is a 46-residue protein sequence, read N- to C-terminus: Hellethionin-D (46 aa).

Intrachain disulfides connect C3-C40, C4-C32, C12-C30, and C16-C26.

This sequence belongs to the plant thionin (TC 1.C.44) family. 4 C-C subfamily.

It localises to the secreted. In terms of biological role, thionins are small plant proteins which are toxic to animal cells. They seem to exert their toxic effect at the level of the cell membrane. Their precise function is not known. The polypeptide is Hellethionin-D (Helleborus purpurascens (Purple hellebore)).